Consider the following 312-residue polypeptide: MEIAVFGGGAWGRALAFAFGEKNEVKIISRRDLNEPLKKLNDALISKGSAPIEQVDLQRGLKATLYVIAISVQHLREWFQNASLPKNAKVLIASKGIEVLNRAFVSEIAKDFIDPNSLCFLAGPSFAAEIIQGLPCALVIHSNNQALALEFANKTPSFIRAYAQQDIIGGEIAGAYKNVIAIAGGVCDGLKLGNSAKASLLSRGLVEMQRFGAFFGGKTETFLGLSGAGDLFLTANSILSRNYRVGLGLAQNKPLEVVLEELGEVAEGVKTTNAIVEIARKYGIYTPIASELALLLKGKSVLESMNDLIRRA.

Positions 11, 30, 31, and 95 each coordinate NADPH. Sn-glycerol 3-phosphate contacts are provided by lysine 95, glycine 123, and serine 125. Alanine 127 provides a ligand contact to NADPH. Residues lysine 177, aspartate 230, serine 240, arginine 241, and asparagine 242 each coordinate sn-glycerol 3-phosphate. Lysine 177 functions as the Proton acceptor in the catalytic mechanism. Arginine 241 contacts NADPH. Residues valine 265 and glutamate 267 each contribute to the NADPH site.

The protein belongs to the NAD-dependent glycerol-3-phosphate dehydrogenase family.

It is found in the cytoplasm. It carries out the reaction sn-glycerol 3-phosphate + NAD(+) = dihydroxyacetone phosphate + NADH + H(+). The enzyme catalyses sn-glycerol 3-phosphate + NADP(+) = dihydroxyacetone phosphate + NADPH + H(+). Its pathway is membrane lipid metabolism; glycerophospholipid metabolism. In terms of biological role, catalyzes the reduction of the glycolytic intermediate dihydroxyacetone phosphate (DHAP) to sn-glycerol 3-phosphate (G3P), the key precursor for phospholipid synthesis. This Helicobacter pylori (strain P12) protein is Glycerol-3-phosphate dehydrogenase [NAD(P)+].